We begin with the raw amino-acid sequence, 104 residues long: NADH-quinone oxidoreductase subunit K (104 aa).

The next 3 membrane-spanning stretches (helical) occupy residues 7 to 27 (LSHY…GIFL), 33 to 53 (IVIL…LVSF), and 67 to 87 (LLVL…LVVF).

It belongs to the complex I subunit 4L family. In terms of assembly, NDH-1 is composed of 14 different subunits. Subunits NuoA, H, J, K, L, M, N constitute the membrane sector of the complex.

The protein localises to the cell inner membrane. It carries out the reaction a quinone + NADH + 5 H(+)(in) = a quinol + NAD(+) + 4 H(+)(out). NDH-1 shuttles electrons from NADH, via FMN and iron-sulfur (Fe-S) centers, to quinones in the respiratory chain. The immediate electron acceptor for the enzyme in this species is believed to be ubiquinone. Couples the redox reaction to proton translocation (for every two electrons transferred, four hydrogen ions are translocated across the cytoplasmic membrane), and thus conserves the redox energy in a proton gradient. The polypeptide is NADH-quinone oxidoreductase subunit K (Xanthobacter autotrophicus (strain ATCC BAA-1158 / Py2)).